Consider the following 312-residue polypeptide: Glyoxylate/hydroxypyruvate reductase A (312 aa).

Arg227 is a catalytic residue. His275 acts as the Proton donor in catalysis.

The protein belongs to the D-isomer specific 2-hydroxyacid dehydrogenase family. GhrA subfamily.

Its subcellular location is the cytoplasm. The catalysed reaction is glycolate + NADP(+) = glyoxylate + NADPH + H(+). It catalyses the reaction (R)-glycerate + NAD(+) = 3-hydroxypyruvate + NADH + H(+). It carries out the reaction (R)-glycerate + NADP(+) = 3-hydroxypyruvate + NADPH + H(+). Catalyzes the NADPH-dependent reduction of glyoxylate and hydroxypyruvate into glycolate and glycerate, respectively. The protein is Glyoxylate/hydroxypyruvate reductase A of Salmonella dublin (strain CT_02021853).